The primary structure comprises 192 residues: VQ motif-containing protein 22 (192 aa).

Low complexity predominate over residues 24-38 (ASTAVTTTTAGDTTS). Positions 24 to 65 (ASTAVTTTTAGDTTSIDSRLSPETGRVTKPTRRRSRASRRTP) are disordered. Residues 52 to 62 (KPTRRRSRASR) show a composition bias toward basic residues. The short motif at 76 to 85 (FRAMVQQYTG) is the VQ element. 2 disordered regions span residues 101-135 (FSLT…PQRP) and 163-192 (FGTV…SRLQ). Composition is skewed to low complexity over residues 102–114 (SLTS…AGSS) and 175–192 (APSS…SRLQ).

Its subcellular location is the nucleus. Functionally, may function as positive regulator of plant growth. The protein is VQ motif-containing protein 22 of Arabidopsis thaliana (Mouse-ear cress).